A 335-amino-acid polypeptide reads, in one-letter code: (+)-caryolan-1-ol synthase (335 aa).

Mg(2+) is bound by residues Asp83, Asp87, Asn220, Ser224, and Glu228. Positions 83–87 match the DDXXD motif motif; sequence DDEFD. The NSE/DTE motif motif lies at 220 to 228; sequence NDICSFEKE.

Belongs to the terpene synthase family. Mg(2+) is required as a cofactor. Mn(2+) serves as cofactor.

It carries out the reaction (2E,6E)-farnesyl diphosphate = (+)-(E)-beta-caryophyllene + diphosphate. The catalysed reaction is (+)-(E)-beta-caryophyllene + H2O = (+)-caryolan-1-ol. It participates in secondary metabolite biosynthesis; terpenoid biosynthesis. In terms of biological role, sesquiterpene cyclase that first catalyzes the cyclization of farnesyl diphosphate (FPP) to the bicyclic sesquiterpene (+)-beta-caryophyllene intermediate, and then its conversion to (+)-caryolan-1-ol via a second cyclization and the addition of a water molecule. This chain is (+)-caryolan-1-ol synthase (gcoA), found in Streptomyces griseus subsp. griseus (strain JCM 4626 / CBS 651.72 / NBRC 13350 / KCC S-0626 / ISP 5235).